Consider the following 242-residue polypeptide: ATP-dependent dethiobiotin synthetase BioD (242 aa).

Position 12–17 (E12–V17) interacts with ATP. T16 contacts Mg(2+). Residue K37 is part of the active site. S41 contacts substrate. Residues D51 and E112–G115 contribute to the ATP site. Mg(2+)-binding residues include D51 and E112.

It belongs to the dethiobiotin synthetase family. Homodimer. Mg(2+) serves as cofactor.

It localises to the cytoplasm. The catalysed reaction is (7R,8S)-7,8-diammoniononanoate + CO2 + ATP = (4R,5S)-dethiobiotin + ADP + phosphate + 3 H(+). The protein operates within cofactor biosynthesis; biotin biosynthesis; biotin from 7,8-diaminononanoate: step 1/2. In terms of biological role, catalyzes a mechanistically unusual reaction, the ATP-dependent insertion of CO2 between the N7 and N8 nitrogen atoms of 7,8-diaminopelargonic acid (DAPA, also called 7,8-diammoniononanoate) to form a ureido ring. The protein is ATP-dependent dethiobiotin synthetase BioD of Bacillus anthracis (strain A0248).